A 287-amino-acid chain; its full sequence is UPF0725 protein At1g19060 (287 aa).

The protein belongs to the UPF0725 (EMB2204) family.

This chain is UPF0725 protein At1g19060, found in Arabidopsis thaliana (Mouse-ear cress).